The primary structure comprises 214 residues: Rac-like GTP-binding protein 3 (214 aa).

15–22 provides a ligand contact to GTP; that stretch reads GDGAVGKT. The Effector region signature appears at 37–45; it reads YIPTVFDNF. GTP is bound by residues 62 to 66 and 120 to 123; these read DTAGQ and TKLD.

This sequence belongs to the small GTPase superfamily. Rho family. Post-translationally, may be palmitoylated.

It is found in the cytoplasm. Its subcellular location is the membrane. Functionally, inactive GDP-bound Rho GTPases reside in the cytosol, are found in a complex with Rho GDP-dissociation inhibitors (Rho GDIs), and are released from the GDI protein in order to translocate to membranes upon activation. The polypeptide is Rac-like GTP-binding protein 3 (RAC3) (Oryza sativa subsp. japonica (Rice)).